The following is a 92-amino-acid chain: Small ribosomal subunit protein uS19c (92 aa).

Belongs to the universal ribosomal protein uS19 family.

The protein resides in the plastid. It localises to the chloroplast. Its function is as follows. Protein S19 forms a complex with S13 that binds strongly to the 16S ribosomal RNA. The chain is Small ribosomal subunit protein uS19c (rps19) from Trieres chinensis (Marine centric diatom).